We begin with the raw amino-acid sequence, 303 residues long: Catechol 1,2-dioxygenase (303 aa).

4 residues coordinate Fe cation: Tyr-156, Tyr-191, His-215, and His-217.

As to quaternary structure, homodimer. Requires Fe(3+) as cofactor.

The enzyme catalyses catechol + O2 = cis,cis-muconate + 2 H(+). It functions in the pathway aromatic compound metabolism; beta-ketoadipate pathway; 5-oxo-4,5-dihydro-2-furylacetate from catechol: step 1/3. Its activity is regulated as follows. Inhibited by Ag(+), Cu(+), Hg(2+) and Pb(2+). In terms of biological role, can cleave 4-methylcatechol at lower rates than catechol, but has no activity with 3-methylcatechol, 4-chlorocatechol, 4-carboxycatechol or hydroxyquinol. This Candida albicans (strain SC5314 / ATCC MYA-2876) (Yeast) protein is Catechol 1,2-dioxygenase (HQD2).